The primary structure comprises 186 residues: Putative glutathione-dependent formaldehyde-activating enzyme (186 aa).

In terms of domain architecture, CENP-V/GFA spans 20–166 (FSGGKLRCKC…FKSIGLETYD (147 aa)). The Zn(2+) site is built by Cys27, Cys29, Cys48, Cys50, Cys53, Cys95, and Cys98.

The protein belongs to the Gfa family. It depends on Zn(2+) as a cofactor.

The enzyme catalyses S-(hydroxymethyl)glutathione = glutathione + formaldehyde. The protein operates within one-carbon metabolism; formaldehyde degradation; formate from formaldehyde (glutathione route): step 1/3. In terms of biological role, catalyzes the condensation of formaldehyde and glutathione to S-hydroxymethylglutathione. The sequence is that of Putative glutathione-dependent formaldehyde-activating enzyme from Fusarium vanettenii (strain ATCC MYA-4622 / CBS 123669 / FGSC 9596 / NRRL 45880 / 77-13-4) (Fusarium solani subsp. pisi).